The following is a 192-amino-acid chain: BON1-associated protein 1 (192 aa).

The C2 domain maps to 1-119 (MIYFGRSIDN…RYSPEGHLNF (119 aa)).

As to quaternary structure, interacts with BON1 (via VWA domain), BON2 and BON3. Expressed in roots, leaves, stems and flowers.

It is found in the membrane. Its function is as follows. Negative regulator of cell death and defense responses. Exhibits calcium-dependent phospholipid binding properties. The sequence is that of BON1-associated protein 1 (BAP1) from Arabidopsis thaliana (Mouse-ear cress).